Here is a 130-residue protein sequence, read N- to C-terminus: uncharacterized protein (130 aa).

Asn102 carries N-linked (GlcNAc...) asparagine glycosylation. A helical membrane pass occupies residues 110–130; that stretch reads DPLAFYLMFLIIITILLIMIL.

Its subcellular location is the membrane. This is an uncharacterized protein from Dictyostelium discoideum (Social amoeba).